A 156-amino-acid chain; its full sequence is Putative pre-16S rRNA nuclease (156 aa).

The protein belongs to the YqgF nuclease family.

The protein resides in the cytoplasm. Its function is as follows. Could be a nuclease involved in processing of the 5'-end of pre-16S rRNA. The sequence is that of Putative pre-16S rRNA nuclease from Caulobacter vibrioides (strain ATCC 19089 / CIP 103742 / CB 15) (Caulobacter crescentus).